Reading from the N-terminus, the 179-residue chain is MKSSLKPVEKYAYSIFEIAKEEKKLDLYKHNLETINSIIEEVPAFFEAVGDPARDRNERKQIVIKNLEGEIDIYLISLIDLLIDVKSIKLLKKIVLKALDFVNEALSVKKVLITTAYELTKNQIDRLVQSLKKKYACEKIEPIVVVDKSIIGGLSINFESQVLDNSLKTKLFNVVKKTN.

This sequence belongs to the ATPase delta chain family. F-type ATPases have 2 components, F(1) - the catalytic core - and F(0) - the membrane proton channel. F(1) has five subunits: alpha(3), beta(3), gamma(1), delta(1), epsilon(1). F(0) has three main subunits: a(1), b(2) and c(10-14). The alpha and beta chains form an alternating ring which encloses part of the gamma chain. F(1) is attached to F(0) by a central stalk formed by the gamma and epsilon chains, while a peripheral stalk is formed by the delta and b chains.

It is found in the cell membrane. In terms of biological role, f(1)F(0) ATP synthase produces ATP from ADP in the presence of a proton or sodium gradient. F-type ATPases consist of two structural domains, F(1) containing the extramembraneous catalytic core and F(0) containing the membrane proton channel, linked together by a central stalk and a peripheral stalk. During catalysis, ATP synthesis in the catalytic domain of F(1) is coupled via a rotary mechanism of the central stalk subunits to proton translocation. Its function is as follows. This protein is part of the stalk that links CF(0) to CF(1). It either transmits conformational changes from CF(0) to CF(1) or is implicated in proton conduction. The protein is ATP synthase subunit delta of Ureaplasma urealyticum serovar 10 (strain ATCC 33699 / Western).